Consider the following 626-residue polypeptide: Chaperone protein HtpG (626 aa).

The segment at 1-332 (MTNNDTPGMR…TEDLPLNVSR (332 aa)) is a; substrate-binding. Residues 333 to 546 (EVVQSSKVMA…KDSLDSSMEK (214 aa)) are b. A c region spans residues 547 to 626 (MMKMMHAEMP…ELIEAATMSR (80 aa)).

The protein belongs to the heat shock protein 90 family. As to quaternary structure, homodimer.

The protein localises to the cytoplasm. Functionally, molecular chaperone. Has ATPase activity. The sequence is that of Chaperone protein HtpG from Chlorobium phaeobacteroides (strain DSM 266 / SMG 266 / 2430).